We begin with the raw amino-acid sequence, 537 residues long: Senescence-associated carboxylesterase 101 (537 aa).

A signal peptide spans 1–27 (MESSSSLKGSALGKLVVTSGLLHSSWS). Residues 140-160 (VIITGAALGGSVASLYTLWLL) form a helical membrane-spanning segment.

Part of a nuclear complex made of EDS1, PAD4 and SAG101, that can be redirected to the cytoplasm in the presence of an extranuclear form of EDS1. Interacts directly with EDS1. In terms of tissue distribution, expressed in senescing leaves.

Its subcellular location is the membrane. It localises to the nucleus. It is found in the cytoplasm. The catalysed reaction is a carboxylic ester + H2O = an alcohol + a carboxylate + H(+). Functionally, acyl hydrolase that triggers the leaf senescence onset. Can use triolein as substrate to produce oleic acids. Involved in the EDS1-dependent intrinsic and indispensable resistance signaling pathway; together with PAD4, required for programmed cell death triggered by RPS4 in response to avirulent pathogens (e.g. P.syringae pv. tomato strain DC3000 and H.parasitica isolates CALA2 and EMWA1) and in restricting the growth of virulent pathogens (e.g. H.parasitica isolates NOCO2 and P.syringae pv. tomato strain DC3000 avrRps4). Contributes in reinforcing the immune response around hypersensitive response foci. Regulates the nuclear localization of EDS1. Essential for the RPP8/HRT-mediated resistance to the turnip crinkle virus (TCV). Involved in the post-invasion resistance to P.pachyrhizi in the mesophyll. This is Senescence-associated carboxylesterase 101 (SAG101) from Arabidopsis thaliana (Mouse-ear cress).